A 443-amino-acid polypeptide reads, in one-letter code: Phosphoglucosamine mutase (443 aa).

S101 functions as the Phosphoserine intermediate in the catalytic mechanism. Positions 101, 239, 241, and 243 each coordinate Mg(2+). S101 bears the Phosphoserine mark.

Belongs to the phosphohexose mutase family. The cofactor is Mg(2+). Activated by phosphorylation.

It catalyses the reaction alpha-D-glucosamine 1-phosphate = D-glucosamine 6-phosphate. Its function is as follows. Catalyzes the conversion of glucosamine-6-phosphate to glucosamine-1-phosphate. This chain is Phosphoglucosamine mutase, found in Francisella philomiragia subsp. philomiragia (strain ATCC 25017 / CCUG 19701 / FSC 153 / O#319-036).